The following is an 869-amino-acid chain: Dimethylglycine dehydrogenase, mitochondrial (869 aa).

Residues 1-43 constitute a mitochondrion transit peptide; sequence MLRPGALRLRGLALRGSPRRPSSAGLREGQESPASPPEWKDRA. A disordered region spans residues 14–39; that stretch reads LRGSPRRPSSAGLREGQESPASPPEW. FAD contacts are provided by residues 52–53, 73–74, and 80–88; these read CV, EK, and GSTWHAAGL. The residue at position 84 (His84) is a Tele-8alpha-FAD histidine. Lys107 carries the N6-acetyllysine modification. An N6-acetyllysine; alternate modification is found at Lys141. At Lys141 the chain carries N6-succinyllysine; alternate. Lys161 bears the N6-acetyllysine mark. Val212 contributes to the FAD binding site. The residue at position 216 (Lys216) is an N6-acetyllysine. Residue Trp244 participates in FAD binding. Residues Lys310 and Lys312 each carry the N6-succinyllysine modification. An N6-acetyllysine mark is found at Lys328 and Lys353. 390–395 contacts FAD; the sequence is FGYGII. Residues Lys427, Lys469, and Lys516 each carry the N6-acetyllysine; alternate modification. N6-succinyllysine; alternate occurs at positions 427, 469, and 516. 573 to 575 serves as a coordination point for (6S)-5,6,7,8-tetrahydrofolate; it reads ELT. N6-acetyllysine; alternate is present on Lys648. An N6-succinyllysine; alternate modification is found at Lys648. (6S)-5,6,7,8-tetrahydrofolate is bound by residues Tyr669, 676–678, and Tyr737; that span reads ELY. Lys757 bears the N6-acetyllysine mark. The residue at position 786 (Lys786) is an N6-acetyllysine; alternate. Lys786 carries the post-translational modification N6-succinyllysine; alternate. At Lys788 the chain carries N6-succinyllysine.

The protein belongs to the GcvT family. It depends on FAD as a cofactor.

It is found in the mitochondrion. The catalysed reaction is (6S)-5,6,7,8-tetrahydrofolyl-(gamma-L-Glu)(n) + N,N-dimethylglycine + oxidized [electron-transfer flavoprotein] + H(+) = (6R)-5,10-methylenetetrahydrofolyl-(gamma-L-Glu)(n) + sarcosine + reduced [electron-transfer flavoprotein]. Its pathway is amine and polyamine degradation; betaine degradation; sarcosine from betaine: step 2/2. Functionally, catalyzes the demethylation of N,N-dimethylglycine to sarcosine. Also has activity with sarcosine in vitro. The chain is Dimethylglycine dehydrogenase, mitochondrial (Dmgdh) from Mus musculus (Mouse).